Reading from the N-terminus, the 142-residue chain is Baculoviral IAP repeat-containing protein 5 (142 aa).

The BIR repeat unit spans residues 18–88 (RIYTFKNWPF…KHSPGCAFLT (71 aa)). Position 23 is an N6-acetyllysine (Lys-23). At Thr-34 the chain carries Phosphothreonine; by CDK1 and CDK15. Position 48 is a phosphothreonine (Thr-48). Residues Cys-57, Cys-60, His-77, and Cys-84 each coordinate Zn(2+). An N6-acetyllysine mark is found at Lys-90, Lys-110, Lys-112, and Lys-115. Thr-117 bears the Phosphothreonine; by AURKB mark.

Belongs to the IAP family. Monomer or homodimer. Exists as a homodimer in the apo state and as a monomer in the CPC-bound state. The monomer protects cells against apoptosis more efficiently than the dimer. Only the dimeric form is capable of enhancing tubulin stability in cells. When phosphorylated, interacts with LAMTOR5/HBXIP; the resulting complex binds pro-CASP9, as well as active CASP9, but much less efficiently. Component of the chromosomal passenger complex (CPC) composed of at least BIRC5/survivin, CDCA8/borealin, INCENP, AURKB or AURKC; in the complex forms a triple-helix bundle-based subcomplex with INCENP and CDCA8. Interacts with JTB. Interacts (via BIR domain) with histone H3 phosphorylated at 'Thr-3' (H3pT3). Interacts with EVI5. Interacts with GTP-bound RAN in both the S and M phases of the cell cycle. Interacts with USP9X. Interacts with tubulin. Interacts with BIRC2/c-IAP1. The monomeric form interacts with XIAP/BIRC4. Both the dimeric and monomeric form can interact with DIABLO/SMAC. Interacts with BIRC6/bruce. Interacts with FBXL7; this interaction facilitates the polyubiquitination and subsequent proteasomal degradation of BIRC5 by the SCF(FBXL7) E3 ubiquitin-protein ligase complex. Ubiquitinated by the Cul9-RING ubiquitin-protein ligase complex, leading to its degradation. Ubiquitination is required for centrosomal targeting. Deubiquitinated by USP35 or USP38; leading to stabilization. Post-translationally, in vitro phosphorylation at Thr-117 by AURKB prevents interaction with INCENP and localization to mitotic chromosomes. Phosphorylation at Thr-48 by CK2 is critical for its mitotic and anti-apoptotic activities. Phosphorylation at Thr-34 by CDK15 is critical for its anti-apoptotic activity.

The protein localises to the cytoplasm. Its subcellular location is the nucleus. It localises to the chromosome. It is found in the centromere. The protein resides in the cytoskeleton. The protein localises to the spindle. Its subcellular location is the kinetochore. It localises to the midbody. Its function is as follows. Multitasking protein that has dual roles in promoting cell proliferation and preventing apoptosis. Component of a chromosome passage protein complex (CPC) which is essential for chromosome alignment and segregation during mitosis and cytokinesis. Acts as an important regulator of the localization of this complex; directs CPC movement to different locations from the inner centromere during prometaphase to midbody during cytokinesis and participates in the organization of the center spindle by associating with polymerized microtubules. Involved in the recruitment of CPC to centromeres during early mitosis via association with histone H3 phosphorylated at 'Thr-3' (H3pT3) during mitosis. The complex with RAN plays a role in mitotic spindle formation by serving as a physical scaffold to help deliver the RAN effector molecule TPX2 to microtubules. May counteract a default induction of apoptosis in G2/M phase. The acetylated form represses STAT3 transactivation of target gene promoters. May play a role in neoplasia. Inhibitor of CASP3 and CASP7. Essential for the maintenance of mitochondrial integrity and function. The chain is Baculoviral IAP repeat-containing protein 5 (Birc5) from Rattus norvegicus (Rat).